The following is a 175-amino-acid chain: Inorganic pyrophosphatase (175 aa).

Positions 30, 44, and 56 each coordinate substrate. 3 residues coordinate Mg(2+): Asp-66, Asp-71, and Asp-103. Substrate is bound at residue Tyr-142.

The protein belongs to the PPase family. As to quaternary structure, homohexamer. It depends on Mg(2+) as a cofactor.

The protein localises to the cytoplasm. It carries out the reaction diphosphate + H2O = 2 phosphate + H(+). Catalyzes the hydrolysis of inorganic pyrophosphate (PPi) forming two phosphate ions. This chain is Inorganic pyrophosphatase, found in Ralstonia nicotianae (strain ATCC BAA-1114 / GMI1000) (Ralstonia solanacearum).